Consider the following 181-residue polypeptide: MMQPLYLVGPRGCGKTTIGMALAQATGFRFADTDRWLQSHVQMSVADIVEKEGWGGFRARETAALEAVSAPSTVVATGGGIILTEYNRRYMHRVGVVIYLCAPVSTLVNRLEAEPEADLRPTLTGKPLSEEVREVLEQRDALYRETAHYIIDATKAPAQVVSEIIAALPPSTQRLQGDVYT.

12–17 (GCGKTT) lines the ATP pocket. Residues T16 and D32 each contribute to the Mg(2+) site. Residues D34, R58, and G79 each contribute to the substrate site. The tract at residues 112-126 (EAEPEADLRPTLTGK) is LID domain. R120 contributes to the ATP binding site. Position 139 (R139) interacts with substrate.

It belongs to the shikimate kinase family. AroL subfamily. As to quaternary structure, monomer. Mg(2+) serves as cofactor.

The protein resides in the cytoplasm. It carries out the reaction shikimate + ATP = 3-phosphoshikimate + ADP + H(+). It functions in the pathway metabolic intermediate biosynthesis; chorismate biosynthesis; chorismate from D-erythrose 4-phosphate and phosphoenolpyruvate: step 5/7. Catalyzes the specific phosphorylation of the 3-hydroxyl group of shikimic acid using ATP as a cosubstrate. In Salmonella enteritidis PT4 (strain P125109), this protein is Shikimate kinase 2.